The sequence spans 101 residues: Small ribosomal subunit protein uS14 (101 aa).

This sequence belongs to the universal ribosomal protein uS14 family. Part of the 30S ribosomal subunit. Contacts proteins S3 and S10.

Its function is as follows. Binds 16S rRNA, required for the assembly of 30S particles and may also be responsible for determining the conformation of the 16S rRNA at the A site. The polypeptide is Small ribosomal subunit protein uS14 (Chelativorans sp. (strain BNC1)).